We begin with the raw amino-acid sequence, 258 residues long: RBPJ-interacting and tubulin-associated protein 1 (258 aa).

Disordered stretches follow at residues 28 to 86 (FGSP…PRKK), 132 to 182 (TPPA…APRS), and 195 to 258 (AVPS…PPWK). Residues 71–81 (SPSSRGSTPNL) are compositionally biased toward polar residues. A Nuclear localization signal motif is present at residues 81–97 (LTPRKKNKYRLIGHTPS). The interaction with RBPJ/RBPSUH stretch occupies residues 117–145 (RTAVEDAAKLRTLFWTPPATPRGSHSPRP). The tract at residues 145–258 (PRETPLRAIH…CPQKPKPPWK (114 aa)) is interaction with tubulin. Composition is skewed to polar residues over residues 201–212 (HPASTAPQTNGP) and 236–245 (GSVSGPTTPQ).

The protein belongs to the RITA family. In terms of assembly, interacts with RBPJ/RBPSUH.

It is found in the cytoplasm. Its subcellular location is the nucleus. The protein resides in the cytoskeleton. It localises to the microtubule organizing center. The protein localises to the centrosome. Functionally, tubulin-binding protein that acts as a negative regulator of Notch signaling pathway. Shuttles between the cytoplasm and the nucleus and mediates the nuclear export of RBPJ/RBPSUH, thereby preventing the interaction between RBPJ/RBPSUH and NICD product of Notch proteins (Notch intracellular domain), leading to down-regulate Notch-mediated transcription. May play a role in neurogenesis. This Rattus norvegicus (Rat) protein is RBPJ-interacting and tubulin-associated protein 1 (Rita1).